A 177-amino-acid chain; its full sequence is Protein Flattop (177 aa).

The interval 113 to 177 (ILGKPHDPDS…TPGPQRPAKS (65 aa)) is disordered. Residues 115–124 (GKPHDPDSQK) are compositionally biased toward basic and acidic residues. Residues 132–163 (TKTVQQARSPTIIPSSPAANLNSPDELQSSHP) show a composition bias toward polar residues.

Belongs to the Flattop family. In terms of assembly, microtubule inner protein component of sperm flagellar doublet microtubules. Interacts with DLG3. Expressed in airway epithelial cells.

The protein localises to the cytoplasm. It is found in the cytoskeleton. The protein resides in the cilium basal body. Its subcellular location is the cell projection. It localises to the cilium. The protein localises to the apical cell membrane. It is found in the cilium axoneme. The protein resides in the flagellum axoneme. Microtubule inner protein (MIP) part of the dynein-decorated doublet microtubules (DMTs) in cilia axoneme. Acts as a regulator of cilium basal body docking and positioning in mono- and multiciliated cells. Regulates basal body docking and cilia formation in multiciliated lung cells. Regulates kinocilium positioning and stereocilia bundle morphogenesis in the inner ear. The chain is Protein Flattop from Homo sapiens (Human).